Consider the following 291-residue polypeptide: Phosphate import ATP-binding protein PstB (291 aa).

One can recognise an ABC transporter domain in the interval 45 to 286 (YSTQNLDLWY…PADKQTEDYI (242 aa)). An ATP-binding site is contributed by 77–84 (GPSGCGKS).

This sequence belongs to the ABC transporter superfamily. Phosphate importer (TC 3.A.1.7) family. In terms of assembly, the complex is composed of two ATP-binding proteins (PstB), two transmembrane proteins (PstC and PstA) and a solute-binding protein (PstS).

It is found in the cell membrane. It carries out the reaction phosphate(out) + ATP + H2O = ADP + 2 phosphate(in) + H(+). In terms of biological role, part of the ABC transporter complex PstSACB involved in phosphate import. Responsible for energy coupling to the transport system. This chain is Phosphate import ATP-binding protein PstB, found in Staphylococcus epidermidis (strain ATCC 12228 / FDA PCI 1200).